Consider the following 47-residue polypeptide: Delta-actitoxin-Axm1d (47 aa).

3 disulfides stabilise this stretch: cysteine 4/cysteine 44, cysteine 6/cysteine 34, and cysteine 27/cysteine 45.

Belongs to the sea anemone sodium channel inhibitory toxin family. Type I subfamily.

Its subcellular location is the secreted. It localises to the nematocyst. Functionally, binds specifically to voltage-gated sodium channels (Nav), thereby delaying their inactivation during signal transduction. Thus it strongly stimulates mammalian cardiac muscle contraction. The chain is Delta-actitoxin-Axm1d from Anthopleura xanthogrammica (Giant green sea anemone).